Consider the following 708-residue polypeptide: Alpha-galactosidase (708 aa).

The active-site Nucleophile is the aspartate 441. Aspartate 505 functions as the Proton donor in the catalytic mechanism.

It belongs to the glycosyl hydrolase 36 family. As to quaternary structure, homotetramer.

It catalyses the reaction Hydrolysis of terminal, non-reducing alpha-D-galactose residues in alpha-D-galactosides, including galactose oligosaccharides, galactomannans and galactolipids.. The polypeptide is Alpha-galactosidase (rafA) (Escherichia coli).